A 947-amino-acid chain; its full sequence is Bifunctional glutamine synthetase adenylyltransferase/adenylyl-removing enzyme (947 aa).

Residues 1–440 are adenylyl removase; sequence MTPLSSPLSQ…VFNELIGDDE (440 aa). An adenylyl transferase region spans residues 450-947; that stretch reads SEPWREVWQD…ASWRKWLVAV (498 aa).

This sequence belongs to the GlnE family. Mg(2+) is required as a cofactor.

It catalyses the reaction [glutamine synthetase]-O(4)-(5'-adenylyl)-L-tyrosine + phosphate = [glutamine synthetase]-L-tyrosine + ADP. The catalysed reaction is [glutamine synthetase]-L-tyrosine + ATP = [glutamine synthetase]-O(4)-(5'-adenylyl)-L-tyrosine + diphosphate. Involved in the regulation of glutamine synthetase GlnA, a key enzyme in the process to assimilate ammonia. When cellular nitrogen levels are high, the C-terminal adenylyl transferase (AT) inactivates GlnA by covalent transfer of an adenylyl group from ATP to specific tyrosine residue of GlnA, thus reducing its activity. Conversely, when nitrogen levels are low, the N-terminal adenylyl removase (AR) activates GlnA by removing the adenylyl group by phosphorolysis, increasing its activity. The regulatory region of GlnE binds the signal transduction protein PII (GlnB) which indicates the nitrogen status of the cell. The polypeptide is Bifunctional glutamine synthetase adenylyltransferase/adenylyl-removing enzyme (Salmonella heidelberg (strain SL476)).